Here is a 304-residue protein sequence, read N- to C-terminus: Dermonecrotic toxin LlSicTox-betaIA1 (304 aa).

The first 21 residues, 1-21 (MLLSAVISFIGFAAFLQEANG), serve as a signal peptide directing secretion. Residues 22 to 26 (HVVER) constitute a propeptide that is removed on maturation. H38 is a catalytic residue. Mg(2+) contacts are provided by E58 and D60. Catalysis depends on H74, which acts as the Nucleophile. Intrachain disulfides connect C78-C84 and C80-C223. D118 serves as a coordination point for Mg(2+).

It belongs to the arthropod phospholipase D family. Class II subfamily. Class IIb sub-subfamily. It depends on Mg(2+) as a cofactor. In terms of tissue distribution, expressed by the venom gland.

The protein resides in the secreted. It catalyses the reaction an N-(acyl)-sphingosylphosphocholine = an N-(acyl)-sphingosyl-1,3-cyclic phosphate + choline. The enzyme catalyses an N-(acyl)-sphingosylphosphoethanolamine = an N-(acyl)-sphingosyl-1,3-cyclic phosphate + ethanolamine. It carries out the reaction a 1-acyl-sn-glycero-3-phosphocholine = a 1-acyl-sn-glycero-2,3-cyclic phosphate + choline. The catalysed reaction is a 1-acyl-sn-glycero-3-phosphoethanolamine = a 1-acyl-sn-glycero-2,3-cyclic phosphate + ethanolamine. Its function is as follows. Dermonecrotic toxins cleave the phosphodiester linkage between the phosphate and headgroup of certain phospholipids (sphingolipid and lysolipid substrates), forming an alcohol (often choline) and a cyclic phosphate. This toxin acts on sphingomyelin (SM) with low activity. It may also act on ceramide phosphoethanolamine (CPE), lysophosphatidylcholine (LPC) and lysophosphatidylethanolamine (LPE), but not on lysophosphatidylserine (LPS), and lysophosphatidylglycerol (LPG). It acts by transphosphatidylation, releasing exclusively cyclic phosphate products as second products. Induces hemolysis, dermonecrosis, and edema. Also induces platelet aggregation. This chain is Dermonecrotic toxin LlSicTox-betaIA1, found in Loxosceles laeta (South American recluse spider).